A 935-amino-acid polypeptide reads, in one-letter code: Phosphoenolpyruvate carboxylase (935 aa).

Catalysis depends on residues histidine 161 and lysine 593.

This sequence belongs to the PEPCase type 1 family. Mg(2+) serves as cofactor.

The enzyme catalyses oxaloacetate + phosphate = phosphoenolpyruvate + hydrogencarbonate. In terms of biological role, forms oxaloacetate, a four-carbon dicarboxylic acid source for the tricarboxylic acid cycle. The protein is Phosphoenolpyruvate carboxylase of Mycolicibacterium paratuberculosis (strain ATCC BAA-968 / K-10) (Mycobacterium paratuberculosis).